The chain runs to 479 residues: GTPase Obg (479 aa).

The Obg domain maps to 2 to 159; it reads PRFVDRVVIH…RDLTLELKTV (158 aa). One can recognise an OBG-type G domain in the interval 160–340; the sequence is ADVGLVGFPS…LIFGLWQMVS (181 aa). Residues 166-173, 191-195, 212-215, 292-295, and 321-323 each bind GTP; these read GFPSAGKS, FTTLV, DVPG, NKID, and STV. S173 and T193 together coordinate Mg(2+). One can recognise an OCT domain in the interval 358–436; sequence PVPVDDSGFD…IGEMTFDWEP (79 aa). Residues 438-479 are disordered; that stretch reads TPAGGHVAMSGRGTDVRLERSDRVGAAERKAARRQRRERDDD. The segment covering 451 to 467 has biased composition (basic and acidic residues); that stretch reads TDVRLERSDRVGAAERK.

Belongs to the TRAFAC class OBG-HflX-like GTPase superfamily. OBG GTPase family. Monomer. Mg(2+) serves as cofactor.

Its subcellular location is the cytoplasm. An essential GTPase which binds GTP, GDP and possibly (p)ppGpp with moderate affinity, with high nucleotide exchange rates and a fairly low GTP hydrolysis rate. Plays a role in control of the cell cycle, stress response, ribosome biogenesis and in those bacteria that undergo differentiation, in morphogenesis control. This Mycobacterium ulcerans (strain Agy99) protein is GTPase Obg.